The chain runs to 236 residues: 2,3,4,5-tetrahydropyridine-2,6-dicarboxylate N-acetyltransferase (236 aa).

This sequence belongs to the transferase hexapeptide repeat family. DapH subfamily.

The catalysed reaction is (S)-2,3,4,5-tetrahydrodipicolinate + acetyl-CoA + H2O = L-2-acetamido-6-oxoheptanedioate + CoA. The protein operates within amino-acid biosynthesis; L-lysine biosynthesis via DAP pathway; LL-2,6-diaminopimelate from (S)-tetrahydrodipicolinate (acetylase route): step 1/3. Its function is as follows. Catalyzes the transfer of an acetyl group from acetyl-CoA to tetrahydrodipicolinate. The protein is 2,3,4,5-tetrahydropyridine-2,6-dicarboxylate N-acetyltransferase of Lactobacillus helveticus (strain DPC 4571).